We begin with the raw amino-acid sequence, 179 residues long: Ribosome maturation factor RimM (179 aa).

Positions valine 102–leucine 175 constitute a PRC barrel domain.

This sequence belongs to the RimM family. As to quaternary structure, binds ribosomal protein uS19.

Its subcellular location is the cytoplasm. In terms of biological role, an accessory protein needed during the final step in the assembly of 30S ribosomal subunit, possibly for assembly of the head region. Essential for efficient processing of 16S rRNA. May be needed both before and after RbfA during the maturation of 16S rRNA. It has affinity for free ribosomal 30S subunits but not for 70S ribosomes. The chain is Ribosome maturation factor RimM from Frankia casuarinae (strain DSM 45818 / CECT 9043 / HFP020203 / CcI3).